The following is a 107-amino-acid chain: Pyrimidine/purine nucleoside phosphorylase (107 aa).

Belongs to the nucleoside phosphorylase PpnP family.

The enzyme catalyses a purine D-ribonucleoside + phosphate = a purine nucleobase + alpha-D-ribose 1-phosphate. It catalyses the reaction adenosine + phosphate = alpha-D-ribose 1-phosphate + adenine. It carries out the reaction cytidine + phosphate = cytosine + alpha-D-ribose 1-phosphate. The catalysed reaction is guanosine + phosphate = alpha-D-ribose 1-phosphate + guanine. The enzyme catalyses inosine + phosphate = alpha-D-ribose 1-phosphate + hypoxanthine. It catalyses the reaction thymidine + phosphate = 2-deoxy-alpha-D-ribose 1-phosphate + thymine. It carries out the reaction uridine + phosphate = alpha-D-ribose 1-phosphate + uracil. The catalysed reaction is xanthosine + phosphate = alpha-D-ribose 1-phosphate + xanthine. Its function is as follows. Catalyzes the phosphorolysis of diverse nucleosides, yielding D-ribose 1-phosphate and the respective free bases. Can use uridine, adenosine, guanosine, cytidine, thymidine, inosine and xanthosine as substrates. Also catalyzes the reverse reactions. This is Pyrimidine/purine nucleoside phosphorylase from Azoarcus sp. (strain BH72).